The primary structure comprises 293 residues: 3-methyl-2-oxobutanoate hydroxymethyltransferase (293 aa).

A disordered region spans residues 1 to 26 (MTQAPVTAGTPYGTIPPASPLPQRRP). Mg(2+)-binding residues include Asp-68 and Asp-111. Residues 68–69 (DS), Asp-111, and Lys-140 each bind 3-methyl-2-oxobutanoate. Glu-142 is a Mg(2+) binding site. The Proton acceptor role is filled by Glu-209.

The protein belongs to the PanB family. As to quaternary structure, homodecamer; pentamer of dimers. Requires Mg(2+) as cofactor.

It localises to the cytoplasm. The enzyme catalyses 3-methyl-2-oxobutanoate + (6R)-5,10-methylene-5,6,7,8-tetrahydrofolate + H2O = 2-dehydropantoate + (6S)-5,6,7,8-tetrahydrofolate. It functions in the pathway cofactor biosynthesis; (R)-pantothenate biosynthesis; (R)-pantoate from 3-methyl-2-oxobutanoate: step 1/2. Catalyzes the reversible reaction in which hydroxymethyl group from 5,10-methylenetetrahydrofolate is transferred onto alpha-ketoisovalerate to form ketopantoate. The chain is 3-methyl-2-oxobutanoate hydroxymethyltransferase from Delftia acidovorans (strain DSM 14801 / SPH-1).